The following is a 380-amino-acid chain: MSLPDTPTLALACELISRSSVTPEDAGCLQLIAQRLAPLGFVCERIDIGGVSNLWARRGSARPLLCFAGHTDVVPTGPLDAWQSPPFEPTIRDGHLYGRGAADMKSSLAGFVTAIERFVAAHPDHAGSIALLLTSDEEGVATCGTVKVVEALAARGERLDYCVVGEPTSVKTLGDMIKNGRRGSLSGTLRVKGRQGHVAYPHLARNPIHELAPALAELAAERWDDGNEFFPPTTWQVSNIHAGTGANNVIPGVCDVLFNFRFGSVSTADALKARTHAILDRHGLDYELDWHLSGKPFITGRGQLVAALGNAIRETVGVETELSTTGGTSDGRFIADICAEVVEFGPVNASIHQVNEHIAVDAVEPLSKIYERTLRALLTA.

H70 is a Zn(2+) binding site. Residue D72 is part of the active site. D103 contributes to the Zn(2+) binding site. The Proton acceptor role is filled by E137. Zn(2+) is bound by residues E138, E166, and H352.

The protein belongs to the peptidase M20A family. DapE subfamily. As to quaternary structure, homodimer. The cofactor is Zn(2+). Co(2+) is required as a cofactor.

The enzyme catalyses N-succinyl-(2S,6S)-2,6-diaminopimelate + H2O = (2S,6S)-2,6-diaminopimelate + succinate. It participates in amino-acid biosynthesis; L-lysine biosynthesis via DAP pathway; LL-2,6-diaminopimelate from (S)-tetrahydrodipicolinate (succinylase route): step 3/3. Catalyzes the hydrolysis of N-succinyl-L,L-diaminopimelic acid (SDAP), forming succinate and LL-2,6-diaminopimelate (DAP), an intermediate involved in the bacterial biosynthesis of lysine and meso-diaminopimelic acid, an essential component of bacterial cell walls. The protein is Succinyl-diaminopimelate desuccinylase of Azoarcus sp. (strain BH72).